Here is a 146-residue protein sequence, read N- to C-terminus: uncharacterized protein (146 aa).

Over residues 86–96 (EFDSPMDEEEE) the composition is skewed to acidic residues. A disordered region spans residues 86–124 (EFDSPMDEEEETKPREASLDQTAPKKSKKEELLVKNNNF).

This is an uncharacterized protein from Ostreid herpesvirus 1 (isolate France) (OsHV-1).